Reading from the N-terminus, the 602-residue chain is Elongation factor 4 (602 aa).

Positions 7 to 189 constitute a tr-type G domain; it reads KYIRNFSIVA…AIVNKVPAPE (183 aa). Residues 19 to 24 and 136 to 139 each bind GTP; these read DHGKST and NKID.

The protein belongs to the TRAFAC class translation factor GTPase superfamily. Classic translation factor GTPase family. LepA subfamily.

It is found in the cell membrane. It carries out the reaction GTP + H2O = GDP + phosphate + H(+). Functionally, required for accurate and efficient protein synthesis under certain stress conditions. May act as a fidelity factor of the translation reaction, by catalyzing a one-codon backward translocation of tRNAs on improperly translocated ribosomes. Back-translocation proceeds from a post-translocation (POST) complex to a pre-translocation (PRE) complex, thus giving elongation factor G a second chance to translocate the tRNAs correctly. Binds to ribosomes in a GTP-dependent manner. In Clostridium botulinum (strain Okra / Type B1), this protein is Elongation factor 4.